The primary structure comprises 229 residues: Molybdenum transport system permease protein ModB (229 aa).

At 1–16 the chain is on the periplasmic side; it reads MILTDPEWQAVLLSLK. The region spanning 11–219 is the ABC transmembrane type-1 domain; sequence VLLSLKVSSL…MISLLISEWL (209 aa). A helical transmembrane segment spans residues 17–37; sequence VSSLAVLFSLPFGIFFAWLLV. At 38–49 the chain is on the cytoplasmic side; it reads RCTFPGKALLDS. Residues 50–70 traverse the membrane as a helical segment; it reads VLHLPLVLPPVVVGYLLLVSM. At 71 to 83 the chain is on the periplasmic side; that stretch reads GRRGFIGERLYDW. The chain crosses the membrane as a helical span at residues 84 to 104; the sequence is FGITFAFSWRGAVLAAAVMSF. Topologically, residues 105–136 are cytoplasmic; it reads PLMVRAIRLALEGVDVKLEQAARTLGAGRWRV. Residues 137-157 form a helical membrane-spanning segment; the sequence is FFTITLPLTLPGIIVGTVLAF. Over 158 to 201 the chain is Periplasmic; the sequence is ARSLGEFGATITFVSNIPGETRTIPSAMYTLIQTPGGESGAARL. Residues 202 to 222 traverse the membrane as a helical segment; it reads CIISIALAMISLLISEWLARI. Topologically, residues 223-229 are cytoplasmic; it reads SRERAGR.

This sequence belongs to the binding-protein-dependent transport system permease family. CysTW subfamily.

It is found in the cell inner membrane. Functionally, part of the binding-protein-dependent transport system for molybdenum; probably responsible for the translocation of the substrate across the membrane. In Escherichia coli O157:H7, this protein is Molybdenum transport system permease protein ModB (modB).